The primary structure comprises 41 residues: PCFCGKTVGIYWFALYSCPGGYGYTGHCGHFMGVCCYPANP.

Cystine bridges form between Cys2–Cys35, Cys4–Cys28, and Cys18–Cys36.

It belongs to the sea anemone type 3 (BDS) potassium channel toxin family.

The protein localises to the secreted. The protein resides in the nematocyst. Potently and selectively inhibits voltage-gated potassium channels Kv11/KCNH/ERG. Acts as a gating-modifier toxin that shifts the voltage-dependence of ERG activation in the positive direction and suppresses its current amplitudes elicited by strong depolarizing pulses that maximally activate the channels. The chain is U-AITX-Bg1a from Bunodosoma granuliferum (Red warty sea anemone).